The sequence spans 725 residues: Glutamine-dependent NAD(+) synthetase (725 aa).

The 271-residue stretch at 5-275 (VTVATCALNQ…VEVLTATLDL (271 aa)) folds into the CN hydrolase domain. E45 serves as the catalytic Proton acceptor; for glutaminase activity. The active-site For glutaminase activity is the K114. The active-site Nucleophile; for glutaminase activity is the C175. A ligase region spans residues 325-706 (YHRPEEEISL…KTSQTLEEQI (382 aa)). Position 355–362 (355–362 (PLSGGVDS)) interacts with ATP. S357 is an active-site residue.

This sequence in the C-terminal section; belongs to the NAD synthetase family. Homohexamer.

It carries out the reaction deamido-NAD(+) + L-glutamine + ATP + H2O = L-glutamate + AMP + diphosphate + NAD(+) + H(+). It functions in the pathway cofactor biosynthesis; NAD(+) biosynthesis; NAD(+) from deamido-NAD(+) (L-Gln route): step 1/1. Its function is as follows. Catalyzes the final step of the nicotinamide adenine dinucleotide (NAD) de novo synthesis pathway, the ATP-dependent amidation of deamido-NAD using L-glutamine as a nitrogen source. In Rattus norvegicus (Rat), this protein is Glutamine-dependent NAD(+) synthetase (Nadsyn1).